A 449-amino-acid polypeptide reads, in one-letter code: Phosphoglucosamine mutase (449 aa).

Catalysis depends on serine 103, which acts as the Phosphoserine intermediate. Mg(2+) is bound by residues serine 103, aspartate 240, aspartate 242, and aspartate 244. Serine 103 is subject to Phosphoserine.

The protein belongs to the phosphohexose mutase family. It depends on Mg(2+) as a cofactor. Post-translationally, activated by phosphorylation.

The catalysed reaction is alpha-D-glucosamine 1-phosphate = D-glucosamine 6-phosphate. Its function is as follows. Catalyzes the conversion of glucosamine-6-phosphate to glucosamine-1-phosphate. The polypeptide is Phosphoglucosamine mutase (Thermobifida fusca (strain YX)).